Consider the following 181-residue polypeptide: RING-H2 finger protein ATL56 (181 aa).

The tract at residues 1–24 is disordered; sequence MPPTNNYRISGEPPSTTPSHPPPK. Residues 15-24 are compositionally biased toward pro residues; that stretch reads STTPSHPPPK. A helical transmembrane segment spans residues 32–52; sequence LFLVGVIMFSIFFLFLVLIGI. An RING-type; atypical zinc finger spans residues 110 to 152; that stretch reads CVVCFDGFRQGQWCRNLPGCGHVFHRKCVDTWLLKASTCPICR.

It belongs to the RING-type zinc finger family. ATL subfamily.

It is found in the membrane. The enzyme catalyses S-ubiquitinyl-[E2 ubiquitin-conjugating enzyme]-L-cysteine + [acceptor protein]-L-lysine = [E2 ubiquitin-conjugating enzyme]-L-cysteine + N(6)-ubiquitinyl-[acceptor protein]-L-lysine.. It functions in the pathway protein modification; protein ubiquitination. The polypeptide is RING-H2 finger protein ATL56 (ATL56) (Arabidopsis thaliana (Mouse-ear cress)).